The following is a 94-amino-acid chain: Large ribosomal subunit protein uL23 (94 aa).

The protein belongs to the universal ribosomal protein uL23 family. Part of the 50S ribosomal subunit. Contacts protein L29, and trigger factor when it is bound to the ribosome.

Its function is as follows. One of the early assembly proteins it binds 23S rRNA. One of the proteins that surrounds the polypeptide exit tunnel on the outside of the ribosome. Forms the main docking site for trigger factor binding to the ribosome. This is Large ribosomal subunit protein uL23 from Roseiflexus castenholzii (strain DSM 13941 / HLO8).